Consider the following 148-residue polypeptide: UPF0756 membrane protein YeaL (148 aa).

4 consecutive transmembrane segments (helical) span residues 14-34, 51-71, 86-106, and 112-132; these read ALGF…LIIV, LSIG…SGTL, LVAI…VTLM, and LVAG…GVPV.

The protein belongs to the UPF0756 family.

It is found in the cell membrane. In Escherichia coli O157:H7, this protein is UPF0756 membrane protein YeaL.